The chain runs to 297 residues: 33 kDa chaperonin (297 aa).

Disulfide bonds link Cys232–Cys234 and Cys266–Cys269.

It belongs to the HSP33 family. In terms of processing, under oxidizing conditions two disulfide bonds are formed involving the reactive cysteines. Under reducing conditions zinc is bound to the reactive cysteines and the protein is inactive.

The protein resides in the cytoplasm. In terms of biological role, redox regulated molecular chaperone. Protects both thermally unfolding and oxidatively damaged proteins from irreversible aggregation. Plays an important role in the bacterial defense system toward oxidative stress. In Pseudomonas aeruginosa (strain UCBPP-PA14), this protein is 33 kDa chaperonin.